We begin with the raw amino-acid sequence, 422 residues long: Keratin, type I cytoskeletal 23 (422 aa).

Polar residues predominate over residues 1-24 (MNSSHSFNQTYSASVHSLGSTRGR). Positions 1–35 (MNSSHSFNQTYSASVHSLGSTRGRQGSCHRAPSVH) are disordered. Positions 1 to 71 (MNSSHSFNQT…GRSSPLLGGN (71 aa)) are head. The segment at 72-107 (GKATMQNLNDRLATYLEKVRALEEANSKLETRILRW) is coil 1A. An IF rod domain is found at 72 to 382 (GKATMQNLND…RLLEGDTEGT (311 aa)). Positions 108-125 (HQEREPSHRKDYSQYEEN) are linker 1. The tract at residues 126-217 (ISRLQEQIVD…KRHEQEMEEN (92 aa)) is coil 1B. The linker 12 stretch occupies residues 218–240 (HLPSDFKVSVKVDTTPGEDLIKV). Residues 241 to 378 (LEDMRQEYEL…ATYRRLLEGD (138 aa)) form a coil 2 region. Residues 379 to 422 (TEGTMDGSESRLKGSEASTIKAITQESVNGRIVLSQVNEIQKHI) form a rod-like helical tail region.

Belongs to the intermediate filament family. In terms of assembly, heterotetramer of two type I and two type II keratins.

This chain is Keratin, type I cytoskeletal 23 (Krt23), found in Mus musculus (Mouse).